We begin with the raw amino-acid sequence, 218 residues long: N-(5'-phosphoribosyl)anthranilate isomerase (218 aa).

The protein belongs to the TrpF family.

The catalysed reaction is N-(5-phospho-beta-D-ribosyl)anthranilate = 1-(2-carboxyphenylamino)-1-deoxy-D-ribulose 5-phosphate. The protein operates within amino-acid biosynthesis; L-tryptophan biosynthesis; L-tryptophan from chorismate: step 3/5. The protein is N-(5'-phosphoribosyl)anthranilate isomerase of Acetivibrio thermocellus (strain ATCC 27405 / DSM 1237 / JCM 9322 / NBRC 103400 / NCIMB 10682 / NRRL B-4536 / VPI 7372) (Clostridium thermocellum).